The following is a 490-amino-acid chain: Sulfate adenylyltransferase (490 aa).

The interval 1 to 165 (MTKALLKDLN…LQAVTPIRHF (165 aa)) is N-terminal. A catalytic region spans residues 166–390 (DFVEYRYSPA…LRQSYPPKYS (225 aa)). Q193 contacts sulfate. ATP is bound by residues 193-196 (QTRN) and 287-290 (GRDH). Residues T194, R195, and N196 contribute to the active site. R195 lines the sulfate pocket. A291 provides a ligand contact to sulfate. M329 is a binding site for ATP. A Phosphothreonine modification is found at T356. Residues 391–490 (QGFVLAVPAT…LSQLSDEGYL (100 aa)) form a required for oligomerization; adenylyl-sulfate kinase-like region.

This sequence belongs to the sulfate adenylyltransferase family. As to quaternary structure, homohexamer. Dimer of trimers.

Its subcellular location is the cytoplasm. It catalyses the reaction sulfate + ATP + H(+) = adenosine 5'-phosphosulfate + diphosphate. The protein operates within sulfur metabolism; hydrogen sulfide biosynthesis; sulfite from sulfate: step 1/3. Its function is as follows. Catalyzes the first intracellular reaction of sulfate assimilation, forming adenosine-5'-phosphosulfate (APS) from inorganic sulfate and ATP. Plays an important role in sulfate activation as a component of the biosynthesis pathway of sulfur-containing amino acids. This chain is Sulfate adenylyltransferase (sua1), found in Schizosaccharomyces pombe (strain 972 / ATCC 24843) (Fission yeast).